A 623-amino-acid chain; its full sequence is uncharacterized protein (623 aa).

The GAF domain maps to 28–171 (TSAEVSQRVL…TIATLFAQVQ (144 aa)). The GGDEF domain occupies 212–345 (GPVAALFLDL…GGDSVAIFTA (134 aa)). Residues 354-609 (RNDIELHLRR…AMRHMLSARR (256 aa)) form the EAL domain.

This is an uncharacterized protein from Mycobacterium tuberculosis (strain CDC 1551 / Oshkosh).